The chain runs to 285 residues: HTH-type transcriptional regulator MurR (285 aa).

Residues 1 to 77 (MLYLTKISNA…MALIGEYSAS (77 aa)) form the HTH rpiR-type domain. The H-T-H motif DNA-binding region spans 37 to 56 (SRQMAKQLGISQSSIVKFAQ). The SIS domain occupies 128–268 (IIEVISKAPF…FVGLVQLNDV (141 aa)).

In terms of assembly, homotetramer.

It functions in the pathway amino-sugar metabolism; N-acetylmuramate degradation [regulation]. Its function is as follows. Represses the expression of the murPQ operon involved in the uptake and degradation of N-acetylmuramic acid (MurNAc). Binds to two adjacent inverted repeats within the operator region. MurNAc 6-phosphate, the substrate of MurQ, is the specific inducer that weakens binding of MurR to the operator. The chain is HTH-type transcriptional regulator MurR from Escherichia coli O139:H28 (strain E24377A / ETEC).